Reading from the N-terminus, the 135-residue chain is Large ribosomal subunit protein uL22 (135 aa).

Belongs to the universal ribosomal protein uL22 family. Part of the 50S ribosomal subunit.

In terms of biological role, this protein binds specifically to 23S rRNA; its binding is stimulated by other ribosomal proteins, e.g. L4, L17, and L20. It is important during the early stages of 50S assembly. It makes multiple contacts with different domains of the 23S rRNA in the assembled 50S subunit and ribosome. The globular domain of the protein is located near the polypeptide exit tunnel on the outside of the subunit, while an extended beta-hairpin is found that lines the wall of the exit tunnel in the center of the 70S ribosome. In Christiangramia forsetii (strain DSM 17595 / CGMCC 1.15422 / KT0803) (Gramella forsetii), this protein is Large ribosomal subunit protein uL22.